We begin with the raw amino-acid sequence, 893 residues long: Translation initiation factor IF-2 (893 aa).

Disordered stretches follow at residues 51-203 and 216-300; these read KEHG…AEAE and EENE…SMQH. Basic and acidic residues-rich tracts occupy residues 102-203, 216-238, and 245-261; these read ALEE…AEAE, EENE…DADY, and HARE…EQQP. In terms of domain architecture, tr-type G spans 392–561; it reads GRAPVVTIMG…LLQSEVLELT (170 aa). The segment at 401 to 408 is G1; that stretch reads GHVDHGKT. Position 401 to 408 (401 to 408) interacts with GTP; it reads GHVDHGKT. The G2 stretch occupies residues 426–430; the sequence is GITQH. The G3 stretch occupies residues 447 to 450; the sequence is DTPG. GTP contacts are provided by residues 447–451 and 501–504; these read DTPGH and NKID. Residues 501-504 are G4; it reads NKID. The G5 stretch occupies residues 537–539; that stretch reads SAK.

Belongs to the TRAFAC class translation factor GTPase superfamily. Classic translation factor GTPase family. IF-2 subfamily.

It is found in the cytoplasm. Its function is as follows. One of the essential components for the initiation of protein synthesis. Protects formylmethionyl-tRNA from spontaneous hydrolysis and promotes its binding to the 30S ribosomal subunits. Also involved in the hydrolysis of GTP during the formation of the 70S ribosomal complex. The chain is Translation initiation factor IF-2 from Aliivibrio fischeri (strain MJ11) (Vibrio fischeri).